The primary structure comprises 482 residues: Transcription initiation factor IIE subunit alpha (482 aa).

An HTH TFE/IIEalpha-type domain is found at 9–99 (VKNLLKFVVR…KYPHAIDAIK (91 aa)). Residues 124–152 (CPICLTKYTQLEAVQLLNFDRTEFLCSLC) form a C4-type zinc finger. The segment covering 274 to 286 (RELQERQAEEKRK) has biased composition (basic and acidic residues). 2 disordered regions span residues 274 to 295 (RELQ…EWHK) and 321 to 482 (AMDS…FEDV). Residues 321 to 345 (AMDSINPDNEPAQETSYQNNRTLTE) are compositionally biased toward polar residues. Positions 374-401 (EEEEEEEEEEDEEEEEEEEMEDVMDDND) are enriched in acidic residues. Positions 419 to 432 (TAGTAKTESNTSND) are enriched in polar residues. A compositionally biased stretch (basic and acidic residues) spans 433 to 444 (VKQESINDKTED). Over residues 464 to 482 (GDDDDDDDDDEMDIEFEDV) the composition is skewed to acidic residues.

The protein belongs to the TFIIE alpha subunit family. TFIIE is a tetramer of two alpha (TFA1) and two beta (TFA2) subunits.

It localises to the nucleus. In terms of biological role, recruits TFIIH to the initiation complex and stimulates the RNA polymerase II C-terminal domain kinase and DNA-dependent ATPase activities of TFIIH. Both TFIIH and TFIIE are required for promoter clearance by RNA polymerase. This Saccharomyces cerevisiae (strain ATCC 204508 / S288c) (Baker's yeast) protein is Transcription initiation factor IIE subunit alpha (TFA1).